A 330-amino-acid chain; its full sequence is Calponin-3 (330 aa).

Lys-23 bears the N6-acetyllysine mark. The 105-residue stretch at 26–130 (QQAEEDLRNW…TLVALAGLAK (105 aa)) folds into the Calponin-homology (CH) domain. Lys-158 carries the N6-methyllysine modification. Calponin-like repeat units lie at residues 164–189 (IGLQ…RHLY), 204–229 (ISLQ…RDIY), and 243–268 (ISLQ…RQVY). The interval 279–330 (PVIHNGSQGTGTNGSEISDSDYQAEYPDEYHGEYPDEYPREYQYGDDQGIDY) is disordered. Basic and acidic residues predominate over residues 306–318 (DEYHGEYPDEYPR).

The protein belongs to the calponin family.

In terms of biological role, thin filament-associated protein that is implicated in the regulation and modulation of smooth muscle contraction. It is capable of binding to actin, calmodulin and tropomyosin. The interaction of calponin with actin inhibits the actomyosin Mg-ATPase activity. This chain is Calponin-3 (Cnn3), found in Rattus norvegicus (Rat).